Consider the following 29-residue polypeptide: Glucagon (29 aa).

This sequence belongs to the glucagon family.

The protein resides in the secreted. Functionally, glucagon plays a key role in glucose metabolism and homeostasis. Regulates blood glucose by increasing gluconeogenesis and decreasing glycolysis. In Lampetra fluviatilis (European river lamprey), this protein is Glucagon (gcg).